We begin with the raw amino-acid sequence, 241 residues long: 2-C-methyl-D-erythritol 4-phosphate cytidylyltransferase (241 aa).

It belongs to the IspD/TarI cytidylyltransferase family. IspD subfamily. In terms of assembly, homodimer.

It catalyses the reaction 2-C-methyl-D-erythritol 4-phosphate + CTP + H(+) = 4-CDP-2-C-methyl-D-erythritol + diphosphate. It functions in the pathway isoprenoid biosynthesis; isopentenyl diphosphate biosynthesis via DXP pathway; isopentenyl diphosphate from 1-deoxy-D-xylulose 5-phosphate: step 2/6. Catalyzes the formation of 4-diphosphocytidyl-2-C-methyl-D-erythritol from CTP and 2-C-methyl-D-erythritol 4-phosphate (MEP). In Yersinia pseudotuberculosis serotype IB (strain PB1/+), this protein is 2-C-methyl-D-erythritol 4-phosphate cytidylyltransferase.